Consider the following 225-residue polypeptide: uncharacterized protein (225 aa).

This is an uncharacterized protein from Mycoplasma genitalium (strain ATCC 33530 / DSM 19775 / NCTC 10195 / G37) (Mycoplasmoides genitalium).